The primary structure comprises 51 residues: uncharacterized protein (51 aa).

A helical transmembrane segment spans residues 20-42 (NFFSRMWNAVVFGFGAAIGASVA).

It localises to the membrane. This is an uncharacterized protein from Schizosaccharomyces pombe (strain 972 / ATCC 24843) (Fission yeast).